The chain runs to 94 residues: Small ribosomal subunit protein uS19 (94 aa).

Belongs to the universal ribosomal protein uS19 family.

Functionally, protein S19 forms a complex with S13 that binds strongly to the 16S ribosomal RNA. This chain is Small ribosomal subunit protein uS19, found in Nitrosomonas eutropha (strain DSM 101675 / C91 / Nm57).